The sequence spans 402 residues: Queuine tRNA-ribosyltransferase-like protein (402 aa).

It belongs to the queuine tRNA-ribosyltransferase family.

The polypeptide is Queuine tRNA-ribosyltransferase-like protein (Theileria parva (East coast fever infection agent)).